A 375-amino-acid polypeptide reads, in one-letter code: Alcohol dehydrogenase class-3 chain L (375 aa).

Position 1 is an N-acetylalanine (A1). Zn(2+)-binding residues include C46, H68, C98, C101, C104, C112, and C175.

Belongs to the zinc-containing alcohol dehydrogenase family. Class-III subfamily. As to quaternary structure, homodimer or heterodimer with H chain. Zn(2+) is required as a cofactor.

The protein resides in the cytoplasm. The enzyme catalyses a primary alcohol + NAD(+) = an aldehyde + NADH + H(+). It catalyses the reaction a secondary alcohol + NAD(+) = a ketone + NADH + H(+). It carries out the reaction S-(hydroxymethyl)glutathione + NADP(+) = S-formylglutathione + NADPH + H(+). The catalysed reaction is S-(hydroxymethyl)glutathione + NAD(+) = S-formylglutathione + NADH + H(+). Class-III ADH is remarkably ineffective in oxidizing ethanol, but it readily catalyzes the oxidation of long-chain primary alcohols and the oxidation of S-(hydroxymethyl) glutathione. This is Alcohol dehydrogenase class-3 chain L from Gadus morhua (Atlantic cod).